A 508-amino-acid chain; its full sequence is UDP-N-acetylmuramyl-tripeptide synthetase (508 aa).

Residue S35 coordinates UDP-N-acetyl-alpha-D-muramoyl-L-alanyl-D-glutamate. Residue 118 to 124 participates in ATP binding; the sequence is GTDGKSS. Residues 163–164, T190, and R200 contribute to the UDP-N-acetyl-alpha-D-muramoyl-L-alanyl-D-glutamate site; that span reads ST. K232 carries the post-translational modification N6-carboxylysine.

The protein belongs to the MurCDEF family. MurE subfamily. In terms of processing, carboxylation is probably crucial for Mg(2+) binding and, consequently, for the gamma-phosphate positioning of ATP.

It localises to the cytoplasm. The protein operates within cell wall biogenesis; peptidoglycan biosynthesis. Its function is as follows. Catalyzes the addition of an amino acid to the nucleotide precursor UDP-N-acetylmuramoyl-L-alanyl-D-glutamate (UMAG) in the biosynthesis of bacterial cell-wall peptidoglycan. This Borrelia garinii subsp. bavariensis (strain ATCC BAA-2496 / DSM 23469 / PBi) (Borreliella bavariensis) protein is UDP-N-acetylmuramyl-tripeptide synthetase.